A 411-amino-acid chain; its full sequence is Putative metal tolerance protein C3 (411 aa).

At 1–115 (MEVNYCPETP…DRAERAAQEL (115 aa)) the chain is on the cytoplasmic side. A helical membrane pass occupies residues 116-136 (AMQISNWANIFLLALKIYATV). The Vacuolar portion of the chain corresponds to 137–140 (KSGS). The helical transmembrane segment at 141–161 (IAIAASTLDSLLDLMAGGILW) threads the bilayer. Residues 162–184 (FTHLSMKNVNIYKYPIGKLRVQP) lie on the Cytoplasmic side of the membrane. A helical membrane pass occupies residues 185-205 (VGIIIFAAVMATLGFQVLLVA). Over 206–222 (AEQLISNEPSEKMNHVQ) the chain is Vacuolar. The chain crosses the membrane as a helical span at residues 223 to 243 (LIWLYSIMLSATAIKLVLWIY). At 244–262 (CKSSRNHIVRAYAKDHHFD) the chain is on the cytoplasmic side. The helical transmembrane segment at 263–283 (VVTNVLGLVAAVLANAFYWWL) threads the bilayer. The Vacuolar portion of the chain corresponds to 284 to 287 (DPTG). Residues 288 to 308 (AILLAIYTIVNWSGTVMENAV) traverse the membrane as a helical segment. The Cytoplasmic segment spans residues 309 to 390 (SLIGQSAPPE…LPEVERAFVH (82 aa)).

The protein belongs to the cation diffusion facilitator (CDF) transporter (TC 2.A.4) family.

Its subcellular location is the vacuole membrane. Its function is as follows. Involved in sequestration of excess metal in the cytoplasm into vacuoles to maintain metal homeostasis. This is Putative metal tolerance protein C3 (MTPC3) from Arabidopsis thaliana (Mouse-ear cress).